A 489-amino-acid chain; its full sequence is Glycogen synthase (489 aa).

Arg20 serves as a coordination point for ADP-alpha-D-glucose.

The protein belongs to the glycosyltransferase 1 family. Bacterial/plant glycogen synthase subfamily.

It catalyses the reaction [(1-&gt;4)-alpha-D-glucosyl](n) + ADP-alpha-D-glucose = [(1-&gt;4)-alpha-D-glucosyl](n+1) + ADP + H(+). It functions in the pathway glycan biosynthesis; glycogen biosynthesis. Its function is as follows. Synthesizes alpha-1,4-glucan chains using ADP-glucose. The polypeptide is Glycogen synthase (Pelodictyon phaeoclathratiforme (strain DSM 5477 / BU-1)).